Reading from the N-terminus, the 104-residue chain is Protein MGF 110-2L (104 aa).

The signal sequence occupies residues 1 to 31 (MRFFSYLGLLLAGLVSLQGFSTDNPLEEELR).

Belongs to the asfivirus MGF 110 family.

Plays a role in virus cell tropism, and may be required for efficient virus replication in macrophages. This is Protein MGF 110-2L from African swine fever virus (isolate Warthog/Namibia/Wart80/1980) (ASFV).